Reading from the N-terminus, the 180-residue chain is Endoribonuclease YbeY (180 aa).

Zn(2+)-binding residues include His-118, His-122, and His-128.

This sequence belongs to the endoribonuclease YbeY family. Zn(2+) serves as cofactor.

The protein resides in the cytoplasm. Functionally, single strand-specific metallo-endoribonuclease involved in late-stage 70S ribosome quality control and in maturation of the 3' terminus of the 16S rRNA. The chain is Endoribonuclease YbeY from Rhodococcus opacus (strain B4).